Reading from the N-terminus, the 451-residue chain is Cindoxin reductase (451 aa).

FAD is bound by residues A24, E45, L53, and V89. NADP(+) contacts are provided by residues 157-160 and 197-198; these read NGNV and RS. Residues W338 and 345-347 each bind FAD; that span reads GGI. G345 lines the NADP(+) pocket.

Belongs to the ferredoxin--NADP reductase type 1 family. FAD serves as cofactor.

Involved in the degradation of cineol (eucalyptol). Catalyzes the reduction of cindoxin (CinC). This is Cindoxin reductase (cinB) from Citrobacter braakii.